The chain runs to 152 residues: MTTETTTTKIIEANEIMKLLPHRYPFLLVDRVVDYEEGKWLKAVKNISVNEPCFTGHFPEQPIFPGVLILEAMAQATGVLACKTYRQLENEIYYFAAIDNARFKRPVLPGDQMVLEVHFLKERRGITRFTGVATVDGQVVCEAELMCARRPA.

H57 is a catalytic residue.

This sequence belongs to the thioester dehydratase family. FabZ subfamily.

The protein localises to the cytoplasm. The catalysed reaction is a (3R)-hydroxyacyl-[ACP] = a (2E)-enoyl-[ACP] + H2O. Involved in unsaturated fatty acids biosynthesis. Catalyzes the dehydration of short chain beta-hydroxyacyl-ACPs and long chain saturated and unsaturated beta-hydroxyacyl-ACPs. The protein is 3-hydroxyacyl-[acyl-carrier-protein] dehydratase FabZ of Pasteurella multocida (strain Pm70).